The chain runs to 172 residues: Shikimate kinase (172 aa).

Residue 11-16 participates in ATP binding; it reads GAGKST. Mg(2+) is bound at residue S15. Residues D33, R57, and G79 each contribute to the substrate site. R117 contacts ATP. R136 contacts substrate. R153 provides a ligand contact to ATP.

It belongs to the shikimate kinase family. As to quaternary structure, monomer. It depends on Mg(2+) as a cofactor.

It is found in the cytoplasm. The enzyme catalyses shikimate + ATP = 3-phosphoshikimate + ADP + H(+). The protein operates within metabolic intermediate biosynthesis; chorismate biosynthesis; chorismate from D-erythrose 4-phosphate and phosphoenolpyruvate: step 5/7. In terms of biological role, catalyzes the specific phosphorylation of the 3-hydroxyl group of shikimic acid using ATP as a cosubstrate. This is Shikimate kinase from Pseudomonas syringae pv. tomato (strain ATCC BAA-871 / DC3000).